The following is a 576-amino-acid chain: Putative ankyrin repeat protein L86 (576 aa).

ANK repeat units lie at residues histidine 68–isoleucine 101, threonine 118–phenylalanine 147, serine 159–isoleucine 188, lysine 192–serine 223, lysine 227–isoleucine 260, lysine 264–isoleucine 300, serine 304–isoleucine 337, glutamine 341–isoleucine 373, lysine 377–alanine 408, lysine 412–aspartate 446, and asparagine 448–valine 480.

In Acanthamoeba polyphaga mimivirus (APMV), this protein is Putative ankyrin repeat protein L86.